We begin with the raw amino-acid sequence, 1278 residues long: SMC5-SMC6 complex localization factor protein 2 (1278 aa).

Disordered regions lie at residues 1–235, 248–337, 443–491, and 509–582; these read MTRR…LGAR, EQKK…KRTE, RINS…FIRH, and EPED…KETK. Positions 39-50 are enriched in basic and acidic residues; the sequence is KRTESPGDRKQS. A compositionally biased stretch (basic residues) spans 94-103; that stretch reads SSPKKLKPKR. Basic and acidic residues-rich tracts occupy residues 118 to 133, 156 to 174, 180 to 199, and 248 to 258; these read GGKEHHKDRGVHESRR, LPKEIKAQKKKHQSPERRK, ESNREKNDRDRGKNSEDSRK, and EQKKLRKEQME. Polar residues-rich tracts occupy residues 259–277 and 318–329; these read QRINSENSFSEASNLSLKS and SDSWELSGSKQN. Basic and acidic residues-rich tracts occupy residues 449 to 463 and 469 to 489; these read KEQRNSVDSDLKSTK and KARESFLEKRPDTSHQREKFI. The segment covering 519–540 has biased composition (polar residues); the sequence is ADSAPSNAGHHSSRNSDQVHSA. Ser591 is modified (phosphoserine). 3 disordered regions span residues 598–724, 739–764, and 798–820; these read PLNA…EEEE, RTPTTSGKPPAVSKGLRSQSSDMKEY, and IRQGRGIKSPLRTGDQDSTDDGD. Residues 609–630 show a composition bias toward basic and acidic residues; sequence PKKDKERSSSKERSGHSTESSK. 3 stretches are compositionally biased toward low complexity: residues 643–654, 666–675, and 688–697; these read SNESSGKNSGGS, PPAALEVVPS, and SGNSNAGSNA. Over residues 707–724 the composition is skewed to acidic residues; the sequence is DSDEESLGYTLESDEEEE. Residues Ser708, Ser712, and Ser719 each carry the phosphoserine modification. The interaction with SIMC1 stretch occupies residues 740-1278; it reads TPTTSGKPPA…QLHDFWVPDS (539 aa). Positions 769–1271 are NSE6-like domain; it reads TYTNTLERLV…NCRPTQGQLH (503 aa). The required for interaction with SLF1 and RAD18 stretch occupies residues 807–1278; that stretch reads PLRTGDQDST…QLHDFWVPDS (472 aa).

The protein belongs to the FAM178 family. In terms of assembly, forms a heterodimer with SIMC1. Interacts with SLF1 (via N-terminus); this interaction links RAD18 to the SMC5-SMC6 complex. Interacts with RAD18; this interaction is increased in a SLF1-dependent manner. Interacts with SMC5 and SMC6.

The protein resides in the nucleus. Its subcellular location is the PML body. Plays a role in the DNA damage response (DDR) pathway by regulating postreplication repair of UV-damaged DNA and genomic stability maintenance. The SLF1-SLF2 complex acts to link RAD18 with the SMC5-SMC6 complex at replication-coupled interstrand cross-links (ICL) and DNA double-strand breaks (DSBs) sites on chromatin during DNA repair in response to stalled replication forks. Promotes the recruitment of the SMC5-SMC6 complex to DNA lesions. May play a role in SMC5-SMC6 complex recruitment for viral restriction. Forms a complex with SIMC1 and this complex is required to recruit SMC5-SMC6 complex to PML nuclear bodies and sites of viral replication. The polypeptide is SMC5-SMC6 complex localization factor protein 2 (Mus musculus (Mouse)).